The chain runs to 99 residues: Ragulator complex protein LAMTOR4 (99 aa).

Position 1 is an N-acetylmethionine (methionine 1). At threonine 2 the chain carries N-acetylthreonine; in Ragulator complex protein LAMTOR4, N-terminally processed. At serine 67 the chain carries Phosphoserine; by PKA.

It belongs to the LAMTOR4 family. As to quaternary structure, part of the Ragulator complex composed of LAMTOR1, LAMTOR2, LAMTOR3, LAMTOR4 and LAMTOR5. LAMTOR4 and LAMTOR5 form a heterodimer that interacts, through LAMTOR1, with a LAMTOR2, LAMTOR3 heterodimer. The Ragulator complex interacts with both the mTORC1 complex and heterodimers constituted of the Rag GTPases RagA/RRAGA, RagB/RRAGB, RagC/RRAGC and RagD/RRAGD; regulated by amino acid availability. The Ragulator complex interacts with SLC38A9; the probable amino acid sensor. Component of the lysosomal folliculin complex (LFC), composed of FLCN, FNIP1 (or FNIP2), RagA/RRAGA or RagB/RRAGB GDP-bound, RagC/RRAGC or RagD/RRAGD GTP-bound, and Ragulator. Post-translationally, phosphorylation at Ser-67 by PKA inhibits Ragulator complex assembly.

It is found in the lysosome. As part of the Ragulator complex it is involved in amino acid sensing and activation of mTORC1, a signaling complex promoting cell growth in response to growth factors, energy levels, and amino acids. Activated by amino acids through a mechanism involving the lysosomal V-ATPase, the Ragulator plays a dual role for the small GTPases Rag (RagA/RRAGA, RagB/RRAGB, RagC/RRAGC and/or RagD/RRAGD): it (1) acts as a guanine nucleotide exchange factor (GEF), activating the small GTPases Rag and (2) mediates recruitment of Rag GTPases to the lysosome membrane. Activated Ragulator and Rag GTPases function as a scaffold recruiting mTORC1 to lysosomes where it is in turn activated. The polypeptide is Ragulator complex protein LAMTOR4 (Homo sapiens (Human)).